The sequence spans 172 residues: Envelope protein UL45 (172 aa).

Topologically, residues 1–27 (MAFRASGPAYQPLAPAASPARARVPAV) are intravirion. Residues 28–48 (AWIGVGAIVGAFALVAALVLV) form a helical; Signal-anchor for type II membrane protein membrane-spanning segment. The Virion surface segment spans residues 49–172 (PPRSSWGLSP…TSIRNALGLP (124 aa)).

The protein belongs to the herpesviridae HHV-1 UL45 family.

It is found in the virion membrane. Important virulence factor of HSV neurotropism. Seems to be required for glycoprotein B-induced fusion. Dispensable for growth in vitro. The chain is Envelope protein UL45 from Homo sapiens (Human).